A 576-amino-acid chain; its full sequence is Putative export ATP-binding/permease protein RC1073 (576 aa).

The ABC transmembrane type-1 domain occupies 20–303 (LIIVMISLLS…IFELLSEMHL (284 aa)). The next 6 membrane-spanning stretches (helical) occupy residues 21–41 (IIVMISLLSVSASLLLIGSVF), 57–77 (VDNSILYICLLIIILSIASFF), 135–155 (FLSFFIRNSVMLIGSITLMFF), 158–178 (FKLASIVIITIPILLIPLIKF), 242–262 (ALFFAISIAVIFLAITLVVWI), and 277–297 (IISFIYYAIIAGVSCGGIFEL). Residues 336 to 572 (IEFKNVDFTY…SEIYRNICRE (237 aa)) form the ABC transporter domain. 371-378 (GRSGAGKS) serves as a coordination point for ATP.

Belongs to the ABC transporter superfamily. In terms of assembly, homodimer.

The protein localises to the cell inner membrane. Part of an ABC transporter complex. Transmembrane domains (TMD) form a pore in the inner membrane and the ATP-binding domain (NBD) is responsible for energy generation. The chain is Putative export ATP-binding/permease protein RC1073 from Rickettsia conorii (strain ATCC VR-613 / Malish 7).